Here is a 269-residue protein sequence, read N- to C-terminus: Serine/arginine-rich splicing factor 5 (269 aa).

The RRM 1 domain occupies 4–74 (CRVFIGRLNP…ERVTIEHARA (71 aa)). The interval 73–105 (RARSRGGRGRGRYSDRFSSRRPRNDRRNAPPVR) is disordered. Basic residues predominate over residues 74 to 83 (ARSRGGRGRG). Phosphoserine is present on S86. The RRM 2 domain maps to 108 to 189 (NRLIVENLSS…SKRHRSRSRS (82 aa)). K167 bears the N6-acetyllysine mark. Residues 174 to 269 (IKLIEGSKRH…SRSRSVDSGN (96 aa)) form a disordered region. A compositionally biased stretch (basic residues) spans 181–226 (KRHRSRSRSRSRTRSSSRSRSRSRSRRSKSYSRSRSRSRSRSKSRS). Residues S224, S226, S230, S247, and S250 each carry the phosphoserine modification. Over residues 239–251 (RGSSSRSKSPASV) the composition is skewed to low complexity.

This sequence belongs to the splicing factor SR family. As to quaternary structure, found in a pre-mRNA splicing complex with SRSF4/SFRS4, SRSF5/SFRS5, SNRNP70, SNRPA1, SRRM1 and SRRM2. Interacts with RBMY; the interaction inhibits SRSF5 pre-mRNA splicing. Interacts (via RS domain) with PHF5A (via N-terminus). Post-translationally, extensively phosphorylated on serine residues in the RS domain.

Its subcellular location is the nucleus. Functionally, may be required for progression through G1 and entry into S phase of cell growth. May play a regulatory role in pre-mRNA splicing. Autoregulates its own expression. Plays a role in constitutive splicing and can modulate the selection of alternative splice sites. In Mus musculus (Mouse), this protein is Serine/arginine-rich splicing factor 5 (Srsf5).